Consider the following 84-residue polypeptide: Conophysin-R (84 aa).

7 disulfide bridges follow: Cys-6-Cys-46, Cys-9-Cys-20, Cys-14-Cys-36, Cys-21-Cys-26, Cys-53-Cys-71, Cys-65-Cys-83, and Cys-72-Cys-77.

As to expression, expressed by the venom duct.

Its subcellular location is the secreted. Targets vasopressin-oxytocin related receptors. No effect observed when injected into goldfish or into mice. The sequence is that of Conophysin-R from Conus radiatus (Rayed cone).